A 1074-amino-acid polypeptide reads, in one-letter code: Pleckstrin homology domain-containing family M member 1 (1074 aa).

An RUN domain is found at 40 to 182 (TSEDGDANTM…LSFELSYKSA (143 aa)). Disordered stretches follow at residues 214–244 (QRKESLDSISHSSGSEDIEVQHSGHKIRRNR), 272–336 (LQEN…MFQT), and 382–454 (DEKQ…PPQE). Ser-218 is modified (phosphoserine). Composition is skewed to polar residues over residues 313–329 (SKAQVNSAPSSGPNQEP) and 393–404 (PAQSTSDQQPSS). Residues Ser-433, Ser-436, and Ser-491 each carry the phosphoserine modification. A disordered region spans residues 506–526 (GNAQPAPAPAPAPAPAPAPAP). A compositionally biased stretch (pro residues) spans 511–525 (APAPAPAPAPAPAPA). The 92-residue stretch at 551 to 642 (GLMKLGTVAR…WLDRVREALQ (92 aa)) folds into the PH 1 domain. The LIR signature appears at 649 to 655 (EDEWVNI). Residues 661-680 (AEDAPEAPPDSLPPYSTLLP) are disordered. The tract at residues 672 to 1074 (LPPYSTLLPE…RKYQEQNVVS (403 aa)) is interaction with RAB7A. One can recognise a PH 2 domain in the interval 701-795 (DAIKESLLYL…WRDLVRKVLA (95 aa)). Residues 1004–1058 (QHVYHCDLCTQRGFICQICHHQDIIFPFEFDTTVRCAECRTVFHQSCQAVVRKGC) form a Phorbol-ester/DAG-type zinc finger.

As to quaternary structure, interacts (via N- and C-terminus) with RAB7A (GTP-bound form). Simultaneously interacts with RAB7A and ARL8B; bringing about clustering and fusion of late endosomes and lysosomes. Interacts (via RUN domain) with ARL8B (GTP-bound form); the interaction is required for PLEKHM1 localization to lysosomes and for ARL8B function in delivery and degradation of endocytic and autophagic cargo in lysosomes. PLEKHM1 and PLEKHM2 compete for interaction with ARL8B. Interacts with ARL8A; the interaction is weaker than with ARL8B. Interacts with VPS41, VPS11, VPS18, VPS33A and VPS39; indicative for an association with the HOPS complex; the interactions with, at least, VPS41, VPS11, VPS18 and VPS33A require ARL8B. Interacts with GABARAP, GABARAPL, GABARAPL2, MAP1LC3A, MAP1LC3B and MAP1LC3C. Interacts with PAFAH1B. Interacts (via N- and C-terminus) with NDEL1. Interacts (via C-terminus) with MAP3K7. Interacts (via N- and C-terminus) with FAM98A. Interacts (via C-terminus) with DEF8; this interaction is weak but increased in a RAB7A-dependent manner. May interact with sialyl-lex-positive protein.

It is found in the autolysosome membrane. The protein localises to the endosome membrane. Its subcellular location is the late endosome membrane. The protein resides in the lysosome membrane. Acts as a multivalent adapter protein that regulates Rab7-dependent and HOPS complex-dependent fusion events in the endolysosomal system and couples autophagic and the endocytic trafficking pathways. Acts as a dual effector of RAB7A and ARL8B that simultaneously binds these GTPases, bringing about clustering and fusion of late endosomes and lysosomes. Required for late stages of endolysosomal maturation, facilitating both endocytosis-mediated degradation of growth factor receptors and autophagosome clearance. Interaction with Arl8b is a crucial factor in the terminal maturation of autophagosomes and to mediate autophagosome-lysosome fusion. Positively regulates lysosome peripheral distribution and ruffled border formation in osteoclasts. May be involved in negative regulation of endocytic transport from early endosome to late endosome/lysosome implicating its association with Rab7. May have a role in sialyl-lex-mediated transduction of apoptotic signals. Involved in bone resorption. The polypeptide is Pleckstrin homology domain-containing family M member 1 (Mus musculus (Mouse)).